Consider the following 512-residue polypeptide: NAD-dependent deacetylase sir2A (512 aa).

Residues 7–110 form a UBP-type zinc finger; that stretch reads IECIHLKDEY…EILENIKSSN (104 aa). Cysteine 9, histidine 11, cysteine 34, cysteine 37, cysteine 46, cysteine 49, cysteine 54, histidine 61, histidine 65, histidine 71, cysteine 84, and cysteine 87 together coordinate Zn(2+). Over residues 113–122 the composition is skewed to basic and acidic residues; sequence DKIVPKKDQK. The interval 113-196 is disordered; it reads DKIVPKKDQK…DESSSEGEES (84 aa). Positions 130-175 are enriched in low complexity; the sequence is VVPSASITTSSTTTSISKQTTVNNTTTTSSSSTTTTTTTTSTTINN. Over residues 176–195 the composition is skewed to acidic residues; the sequence is NEEEEESESETDESSSEGEE. Residues 231 to 503 enclose the Deacetylase sirtuin-type domain; it reads CVLKKPTIEE…LDLIKLLGWE (273 aa). Histidine 361 serves as the catalytic Proton acceptor. Residues cysteine 369, cysteine 372, cysteine 393, and cysteine 399 each contribute to the Zn(2+) site.

Belongs to the sirtuin family. Zn(2+) serves as cofactor.

It catalyses the reaction N(6)-acetyl-L-lysyl-[protein] + NAD(+) + H2O = 2''-O-acetyl-ADP-D-ribose + nicotinamide + L-lysyl-[protein]. In terms of biological role, NAD-dependent deacetylase, which plays an important role in the regulation of transcriptional repression. The sequence is that of NAD-dependent deacetylase sir2A (sir2A) from Dictyostelium discoideum (Social amoeba).